The chain runs to 699 residues: DNA ligase (699 aa).

The interval 1–20 (MTVQKPIESLSPAQAKREHR) is disordered. Residues 43–47 (DAEYD), 92–93 (SL), and Glu126 contribute to the NAD(+) site. The active-site N6-AMP-lysine intermediate is the Lys128. The NAD(+) site is built by Arg149, Glu185, Lys301, and Lys325. 4 residues coordinate Zn(2+): Cys419, Cys422, Cys443, and Cys449. The BRCT domain occupies 621-699 (AKESPVAGKT…EEDWLKLVGE (79 aa)).

Belongs to the NAD-dependent DNA ligase family. LigA subfamily. The cofactor is Mg(2+). Mn(2+) serves as cofactor.

The catalysed reaction is NAD(+) + (deoxyribonucleotide)n-3'-hydroxyl + 5'-phospho-(deoxyribonucleotide)m = (deoxyribonucleotide)n+m + AMP + beta-nicotinamide D-nucleotide.. Its function is as follows. DNA ligase that catalyzes the formation of phosphodiester linkages between 5'-phosphoryl and 3'-hydroxyl groups in double-stranded DNA using NAD as a coenzyme and as the energy source for the reaction. It is essential for DNA replication and repair of damaged DNA. The sequence is that of DNA ligase from Beijerinckia indica subsp. indica (strain ATCC 9039 / DSM 1715 / NCIMB 8712).